The chain runs to 435 residues: Polyadenylate-binding protein RBP47B (435 aa).

Polar residues predominate over residues 1–15 (MQTTNGSDSTLATSG). 2 disordered regions span residues 1 to 41 (MQTT…QQWM) and 85 to 104 (YGSY…RGSG). Over residues 29–41 (QWQQQQQQQQQWM) the composition is skewed to low complexity. 3 consecutive RRM domains span residues 108 to 188 (KTLW…WASF), 202 to 281 (LSVF…IATP), and 321 to 393 (ATIF…WGRS). A disordered region spans residues 392–412 (RSPNKQWRGDSGQQWNGGYSR).

Belongs to the polyadenylate-binding RBP47 family. As to quaternary structure, interacts with the poly(A) tail of mRNA in nucleus. As to expression, expressed at low levels in leaves, stems, flowers, and seedlings.

The protein localises to the nucleus. The protein resides in the cytoplasmic granule. In terms of biological role, heterogeneous nuclear ribonucleoprotein (hnRNP)-protein binding the poly(A) tail of mRNA and probably involved in some steps of pre-mRNA maturation. This chain is Polyadenylate-binding protein RBP47B (RBP47B), found in Arabidopsis thaliana (Mouse-ear cress).